Here is a 278-residue protein sequence, read N- to C-terminus: 4-diphosphocytidyl-2-C-methyl-D-erythritol kinase (278 aa).

Residue Lys9 is part of the active site. Residue 93–103 (PISAGLAGGSS) coordinates ATP. The active site involves Asp135.

The protein belongs to the GHMP kinase family. IspE subfamily.

The catalysed reaction is 4-CDP-2-C-methyl-D-erythritol + ATP = 4-CDP-2-C-methyl-D-erythritol 2-phosphate + ADP + H(+). It participates in isoprenoid biosynthesis; isopentenyl diphosphate biosynthesis via DXP pathway; isopentenyl diphosphate from 1-deoxy-D-xylulose 5-phosphate: step 3/6. Its function is as follows. Catalyzes the phosphorylation of the position 2 hydroxy group of 4-diphosphocytidyl-2C-methyl-D-erythritol. In Finegoldia magna (strain ATCC 29328 / DSM 20472 / WAL 2508) (Peptostreptococcus magnus), this protein is 4-diphosphocytidyl-2-C-methyl-D-erythritol kinase.